Here is a 419-residue protein sequence, read N- to C-terminus: Cysteine desulfurase (419 aa).

Pyridoxal 5'-phosphate-binding positions include 69-70 (AT), Asn-157, Gln-185, and 205-207 (SAH). Lys-208 is modified (N6-(pyridoxal phosphate)lysine). Thr-245 is a pyridoxal 5'-phosphate binding site. Catalysis depends on Cys-333, which acts as the Cysteine persulfide intermediate. Cys-333 provides a ligand contact to [2Fe-2S] cluster. Positions 392–419 (TPIQDEVRDDNRASSNSLNRGSAASKES) are disordered. The segment covering 404–413 (ASSNSLNRGS) has biased composition (polar residues).

Belongs to the class-V pyridoxal-phosphate-dependent aminotransferase family. NifS/IscS subfamily. Homodimer. Pyridoxal 5'-phosphate is required as a cofactor.

The enzyme catalyses (sulfur carrier)-H + L-cysteine = (sulfur carrier)-SH + L-alanine. Its function is as follows. Catalyzes the removal of elemental sulfur atoms from cysteine to produce alanine. Seems to participate in the biosynthesis of the nitrogenase metalloclusters by providing the inorganic sulfur required for the Fe-S core formation. The protein is Cysteine desulfurase of Frankia sp. (strain EuIK1).